A 332-amino-acid chain; its full sequence is Melanocortin receptor 4 (332 aa).

Over 1 to 43 the chain is Extracellular; sequence MNSTHHHGMHTSLHFWNRSTYGLHSNASEPLGKGYSEGGCYEQ. N-linked (GlcNAc...) asparagine glycosylation is found at Asn2, Asn17, and Asn26. Disulfide bonds link Cys40–Cys279 and Cys271–Cys277. The chain crosses the membrane as a helical span at residues 44–69; it reads LFVSPEVFVTLGVISLLENILVIVAI. Over 70 to 81 the chain is Cytoplasmic; that stretch reads AKNKNLHSPMYF. Residues 82–106 form a helical membrane-spanning segment; it reads FICSLAVADMLVSVSNGSETIVITL. Ca(2+) contacts are provided by Glu100, Asp122, and Asp126. Residues 107 to 123 are Extracellular-facing; that stretch reads LNSTDTDAQSFTVNIDN. The chain crosses the membrane as a helical span at residues 124-145; that stretch reads VIDSVICSSLLASICSLLSIAV. Residues 146 to 165 lie on the Cytoplasmic side of the membrane; that stretch reads DRYFTIFYALQYHNIMTVKR. A helical transmembrane segment spans residues 166 to 186; it reads VGIIISCIWAVCTVSGVLFII. Residues 187-191 lie on the Extracellular side of the membrane; that stretch reads YSDSS. The helical transmembrane segment at 192–215 threads the bilayer; that stretch reads AVIICLITVFFTMLALMASLYVHM. Over 216-248 the chain is Cytoplasmic; the sequence is FLMARLHIKRIAVLPGTGTIRQGANMKGAITLT. The helical transmembrane segment at 249–271 threads the bilayer; it reads ILIGVFVVCWAPFFLHLIFYISC. Over 272–280 the chain is Extracellular; sequence PQNPYCVCF. A helical transmembrane segment spans residues 281–304; sequence MSHFNLYLILIMCNSIIDPLIYAL. Topologically, residues 305–332 are cytoplasmic; the sequence is RSQELRKTFKEIICCYPLGGLCDLSSRY. Residue Cys318 is the site of S-palmitoyl cysteine attachment.

It belongs to the G-protein coupled receptor 1 family. In terms of assembly, homodimer; disulfide-linked, also forms higher order oligomers. Interacts with GNAS. Interacts with ATRNL1. Interacts with MGRN1; this interaction competes with GNAS-binding and thus inhibits agonist-induced cAMP production. Interacts with MRAP and MRAP2; these associated factors increase ligand-sensitivity and generation of cAMP.

The protein localises to the cell membrane. Functionally, hormone receptor that acts as a key component of the leptin-melanocortin pathway at the intersection of homeostatic maintenance of energetic state. Plays a role in regulating food intake: activation by a stimulating hormone such as anorexigenic alpha-melanocyte stimulating hormone (alpha-MSH) inhibits appetite, whereas binding to a natural antagonist like Agouti-related protein/AGRP promotes appetite. G-protein-coupled receptor that activates conventional Galphas signaling leading to induction of anorexogenic signaling in the hypothalamus to result in negative energy balance. Regulates the firing activity of neurons from the hypothalamus by alpha-MSH and AGRP independently of Galphas signaling by ligand-induced coupling of closure of inwardly rectifying potassium channel KCNJ13. In intestinal epithelial cells, plays a role in the inhibition of hepatic glucose production via nesfatin-1/NUCB2 leading to increased cyclic adenosine monophosphate (cAMP) levels and glucagon-like peptide 1 (GLP-1) secretion in the intestinal epithelium. The sequence is that of Melanocortin receptor 4 (MC4R) from Sus scrofa (Pig).